Here is a 201-residue protein sequence, read N- to C-terminus: Orotate phosphoribosyltransferase (201 aa).

113-121 (EDIITTGKS) serves as a coordination point for 5-phospho-alpha-D-ribose 1-diphosphate. Positions 117 and 145 each coordinate orotate.

Belongs to the purine/pyrimidine phosphoribosyltransferase family. PyrE subfamily. In terms of assembly, homodimer. Mg(2+) is required as a cofactor.

The catalysed reaction is orotidine 5'-phosphate + diphosphate = orotate + 5-phospho-alpha-D-ribose 1-diphosphate. It functions in the pathway pyrimidine metabolism; UMP biosynthesis via de novo pathway; UMP from orotate: step 1/2. Its function is as follows. Catalyzes the transfer of a ribosyl phosphate group from 5-phosphoribose 1-diphosphate to orotate, leading to the formation of orotidine monophosphate (OMP). The sequence is that of Orotate phosphoribosyltransferase from Helicobacter pylori (strain G27).